The chain runs to 345 residues: Microtubule-associated protein Jupiter (345 aa).

The span at M1–S14 shows a compositional bias: polar residues. Residues M1–Q34 form a disordered region. Residue S24 is modified to Phosphoserine. At T35 the chain carries Phosphothreonine. Over residues Q78 to L87 the composition is skewed to basic and acidic residues. A disordered region spans residues Q78 to N100. 2 positions are modified to phosphothreonine: T92 and T96. Residues S105, S134, and S145 each carry the phosphoserine modification. 2 disordered regions span residues H127 to S241 and E300 to W345. The segment covering S132–S145 has biased composition (low complexity). The segment covering T146–T164 has biased composition (polar residues). The segment covering L177–P191 has biased composition (pro residues). Polar residues-rich tracts occupy residues D212–C226 and D315–G326.

Belongs to the MAP Jupiter family.

The protein localises to the nucleus. Its subcellular location is the cytoplasm. The protein resides in the cytoskeleton. It localises to the spindle. Functionally, binds to all microtubule populations. The chain is Microtubule-associated protein Jupiter from Drosophila erecta (Fruit fly).